The chain runs to 380 residues: Putative glutamate--cysteine ligase 2-2 (380 aa).

This sequence belongs to the glutamate--cysteine ligase type 2 family. YbdK subfamily.

The enzyme catalyses L-cysteine + L-glutamate + ATP = gamma-L-glutamyl-L-cysteine + ADP + phosphate + H(+). Its function is as follows. ATP-dependent carboxylate-amine ligase which exhibits weak glutamate--cysteine ligase activity. The protein is Putative glutamate--cysteine ligase 2-2 of Nocardia farcinica (strain IFM 10152).